The primary structure comprises 207 residues: Neuroendocrine protein 7B2 (207 aa).

Positions 1–22 (MVSTMLSGLVLWLTFGWTPALA) are cleaved as a signal peptide. C116 and C125 are oxidised to a cystine. A phosphoserine mark is found at S136 and S200. A disordered region spans residues 168–207 (KGGQRRKRRSVNPYLQGQRLDNVVAKKSVPHFSDEDKDPE).

The protein belongs to the 7B2 family. As to quaternary structure, interacts with PCSK2/PC2 early in the secretory pathway. Dissociation occurs at later stages. Post-translationally, proteolytically cleaved in the Golgi by a furin-like convertase to generate bioactive peptides. Sulfated on tyrosine residues.

The protein resides in the secreted. Functionally, acts as a molecular chaperone for PCSK2/PC2, preventing its premature activation in the regulated secretory pathway. Binds to inactive PCSK2 in the endoplasmic reticulum and facilitates its transport from there to later compartments of the secretory pathway where it is proteolytically matured and activated. Also required for cleavage of PCSK2 but does not appear to be involved in its folding. Plays a role in regulating pituitary hormone secretion. The C-terminal peptide inhibits PCSK2 in vitro. This is Neuroendocrine protein 7B2 (SCG5) from Sus scrofa (Pig).